The primary structure comprises 237 residues: BTB/POZ domain-containing protein KCTD6 (237 aa).

The BTB domain maps to 12-81 (HPVTLNVGGH…LRTSELTLPV (70 aa)).

Homopentamer. May be part of a cullin-containing E3 ubiquitin-protein ligase complex.

The protein operates within protein modification; protein ubiquitination. Probable substrate-specific adapter of a cullin-containing E3 ubiquitin-protein ligase complex mediating the ubiquitination and subsequent proteasomal degradation of target proteins. The chain is BTB/POZ domain-containing protein KCTD6 (kctd6) from Danio rerio (Zebrafish).